The following is a 433-amino-acid chain: Serine hydroxymethyltransferase (433 aa).

Residues Leu-127 and 131 to 133 (GHL) contribute to the (6S)-5,6,7,8-tetrahydrofolate site. Lys-236 is modified (N6-(pyridoxal phosphate)lysine).

The protein belongs to the SHMT family. In terms of assembly, homodimer. Requires pyridoxal 5'-phosphate as cofactor.

Its subcellular location is the cytoplasm. The catalysed reaction is (6R)-5,10-methylene-5,6,7,8-tetrahydrofolate + glycine + H2O = (6S)-5,6,7,8-tetrahydrofolate + L-serine. It functions in the pathway one-carbon metabolism; tetrahydrofolate interconversion. The protein operates within amino-acid biosynthesis; glycine biosynthesis; glycine from L-serine: step 1/1. In terms of biological role, catalyzes the reversible interconversion of serine and glycine with tetrahydrofolate (THF) serving as the one-carbon carrier. This reaction serves as the major source of one-carbon groups required for the biosynthesis of purines, thymidylate, methionine, and other important biomolecules. Also exhibits THF-independent aldolase activity toward beta-hydroxyamino acids, producing glycine and aldehydes, via a retro-aldol mechanism. The polypeptide is Serine hydroxymethyltransferase (Corynebacterium urealyticum (strain ATCC 43042 / DSM 7109)).